The chain runs to 297 residues: Mitochondrial glycine transporter (297 aa).

Solcar repeat units lie at residues 5–81 (TGHL…MRTA), 105–189 (LSMY…LKHT), and 211–295 (TSTA…LIKH). 6 consecutive transmembrane segments (helical) span residues 8 to 33 (LIGG…TRFQ), 56 to 82 (GTLP…RTAL), 111 to 136 (LVTG…VRYE), 164 to 187 (GFGP…EKLK), 215 to 241 (INST…KTRM), and 270 to 288 (GLSM…AWGI).

The protein belongs to the mitochondrial carrier (TC 2.A.29) family. SLC25A38 subfamily.

Its subcellular location is the mitochondrion inner membrane. It catalyses the reaction glycine(in) = glycine(out). Mitochondrial glycine transporter that imports glycine into the mitochondrial matrix. Plays an important role in providing glycine for the first enzymatic step in heme biosynthesis, the condensation of glycine with succinyl-CoA to produce 5-aminolevulinate (ALA) in the mitochondrial matrix. This Candida glabrata (strain ATCC 2001 / BCRC 20586 / JCM 3761 / NBRC 0622 / NRRL Y-65 / CBS 138) (Yeast) protein is Mitochondrial glycine transporter.